A 353-amino-acid chain; its full sequence is Farnesyl pyrophosphate synthase (353 aa).

Positions 57, 60, and 96 each coordinate isopentenyl diphosphate. Lys57 is subject to N6-(2-hydroxyisobutyryl)lysine; alternate. Lys57 is modified (N6-acetyllysine; alternate). Mg(2+)-binding residues include Asp103 and Asp107. Arg112 serves as a coordination point for dimethylallyl diphosphate. Residue Arg113 coordinates isopentenyl diphosphate. Dimethylallyl diphosphate-binding residues include Lys200, Thr201, Gln240, Lys257, and Lys266.

It belongs to the FPP/GGPP synthase family. Homodimer. Interacts with RSAD2. It depends on Mg(2+) as a cofactor.

The protein localises to the cytoplasm. The enzyme catalyses isopentenyl diphosphate + dimethylallyl diphosphate = (2E)-geranyl diphosphate + diphosphate. It catalyses the reaction isopentenyl diphosphate + (2E)-geranyl diphosphate = (2E,6E)-farnesyl diphosphate + diphosphate. The protein operates within isoprenoid biosynthesis; farnesyl diphosphate biosynthesis; farnesyl diphosphate from geranyl diphosphate and isopentenyl diphosphate: step 1/1. It participates in isoprenoid biosynthesis; geranyl diphosphate biosynthesis; geranyl diphosphate from dimethylallyl diphosphate and isopentenyl diphosphate: step 1/1. Inactivated by interferon-induced RSAD2. This inactivation may result of disruption of lipid rafts at the plasma membrane, and thus have an antiviral effect since many enveloped viruses need lipid rafts to bud efficiently out of the cell. In terms of biological role, key enzyme in isoprenoid biosynthesis which catalyzes the formation of farnesyl diphosphate (FPP), a precursor for several classes of essential metabolites including sterols, dolichols, carotenoids, and ubiquinones. FPP also serves as substrate for protein farnesylation and geranylgeranylation. Catalyzes the sequential condensation of isopentenyl pyrophosphate with the allylic pyrophosphates, dimethylallyl pyrophosphate, and then with the resultant geranylpyrophosphate to the ultimate product farnesyl pyrophosphate. This Mus musculus (Mouse) protein is Farnesyl pyrophosphate synthase (Fdps).